Here is a 345-residue protein sequence, read N- to C-terminus: Phosphoribosylformylglycinamidine cyclo-ligase (345 aa).

The protein belongs to the AIR synthase family.

It localises to the cytoplasm. The catalysed reaction is 2-formamido-N(1)-(5-O-phospho-beta-D-ribosyl)acetamidine + ATP = 5-amino-1-(5-phospho-beta-D-ribosyl)imidazole + ADP + phosphate + H(+). It functions in the pathway purine metabolism; IMP biosynthesis via de novo pathway; 5-amino-1-(5-phospho-D-ribosyl)imidazole from N(2)-formyl-N(1)-(5-phospho-D-ribosyl)glycinamide: step 2/2. The polypeptide is Phosphoribosylformylglycinamidine cyclo-ligase (Pseudoalteromonas atlantica (strain T6c / ATCC BAA-1087)).